The following is a 501-amino-acid chain: Lysine--tRNA ligase (501 aa).

Residues Glu-406 and Glu-413 each coordinate Mg(2+).

It belongs to the class-II aminoacyl-tRNA synthetase family. Homodimer. Requires Mg(2+) as cofactor.

The protein localises to the cytoplasm. It catalyses the reaction tRNA(Lys) + L-lysine + ATP = L-lysyl-tRNA(Lys) + AMP + diphosphate. This is Lysine--tRNA ligase (lysS) from Halalkalibacterium halodurans (strain ATCC BAA-125 / DSM 18197 / FERM 7344 / JCM 9153 / C-125) (Bacillus halodurans).